The chain runs to 132 residues: Myelin P2 protein (132 aa).

Residue S2 is modified to N-acetylserine. (9Z)-octadecenoate contacts are provided by residues R107 and 127–129 (RIY). Hexadecanoate-binding positions include R107 and 127-129 (RIY).

Belongs to the calycin superfamily. Fatty-acid binding protein (FABP) family. Monomer.

It is found in the cytoplasm. In terms of biological role, may play a role in lipid transport protein in Schwann cells. May bind cholesterol. This is Myelin P2 protein (Pmp2) from Mus musculus (Mouse).